Consider the following 384-residue polypeptide: PqqA peptide cyclase (384 aa).

The region spanning 15–231 is the Radical SAM core domain; it reads PGPPLWLLAE…NQWRDKLAAE (217 aa). Residues Cys29, Cys33, and Cys36 each contribute to the [4Fe-4S] cluster site.

Belongs to the radical SAM superfamily. PqqE family. As to quaternary structure, interacts with PqqD. The interaction is necessary for activity of PqqE. It depends on [4Fe-4S] cluster as a cofactor.

It carries out the reaction [PQQ precursor protein] + S-adenosyl-L-methionine = E-Y cross-linked-[PQQ precursor protein] + 5'-deoxyadenosine + L-methionine + H(+). It functions in the pathway cofactor biosynthesis; pyrroloquinoline quinone biosynthesis. Catalyzes the cross-linking of a glutamate residue and a tyrosine residue in the PqqA protein as part of the biosynthesis of pyrroloquinoline quinone (PQQ). The sequence is that of PqqA peptide cyclase from Ectopseudomonas mendocina (strain ymp) (Pseudomonas mendocina).